A 263-amino-acid polypeptide reads, in one-letter code: Endonuclease 8 (263 aa).

Residue proline 2 is the Schiff-base intermediate with DNA of the active site. Residue glutamate 3 is the Proton donor of the active site. Lysine 53 serves as the catalytic Proton donor; for beta-elimination activity. DNA contacts are provided by glutamine 70, arginine 125, and asparagine 169. The FPG-type zinc finger occupies 229-263 (KVFHRDGEPCERCGSIIEKTTLSSRPFYWCPGCQH). Catalysis depends on arginine 253, which acts as the Proton donor; for delta-elimination activity.

The protein belongs to the FPG family. The cofactor is Zn(2+).

The enzyme catalyses 2'-deoxyribonucleotide-(2'-deoxyribose 5'-phosphate)-2'-deoxyribonucleotide-DNA = a 3'-end 2'-deoxyribonucleotide-(2,3-dehydro-2,3-deoxyribose 5'-phosphate)-DNA + a 5'-end 5'-phospho-2'-deoxyribonucleoside-DNA + H(+). Its function is as follows. Involved in base excision repair of DNA damaged by oxidation or by mutagenic agents. Acts as a DNA glycosylase that recognizes and removes damaged bases. Has a preference for oxidized pyrimidines, such as thymine glycol, 5,6-dihydrouracil and 5,6-dihydrothymine. Has AP (apurinic/apyrimidinic) lyase activity and introduces nicks in the DNA strand. Cleaves the DNA backbone by beta-delta elimination to generate a single-strand break at the site of the removed base with both 3'- and 5'-phosphates. The chain is Endonuclease 8 from Escherichia coli (strain K12 / MC4100 / BW2952).